Reading from the N-terminus, the 234-residue chain is Segregation and condensation protein A (234 aa).

This sequence belongs to the ScpA family. In terms of assembly, component of a cohesin-like complex composed of ScpA, ScpB and the Smc homodimer, in which ScpA and ScpB bind to the head domain of Smc. The presence of the three proteins is required for the association of the complex with DNA.

Its subcellular location is the cytoplasm. Functionally, participates in chromosomal partition during cell division. May act via the formation of a condensin-like complex containing Smc and ScpB that pull DNA away from mid-cell into both cell halves. The protein is Segregation and condensation protein A of Streptococcus pyogenes serotype M6 (strain ATCC BAA-946 / MGAS10394).